The chain runs to 415 residues: Gamma-glutamyl phosphate reductase (415 aa).

It belongs to the gamma-glutamyl phosphate reductase family.

It is found in the cytoplasm. It catalyses the reaction L-glutamate 5-semialdehyde + phosphate + NADP(+) = L-glutamyl 5-phosphate + NADPH + H(+). Its pathway is amino-acid biosynthesis; L-proline biosynthesis; L-glutamate 5-semialdehyde from L-glutamate: step 2/2. Functionally, catalyzes the NADPH-dependent reduction of L-glutamate 5-phosphate into L-glutamate 5-semialdehyde and phosphate. The product spontaneously undergoes cyclization to form 1-pyrroline-5-carboxylate. The polypeptide is Gamma-glutamyl phosphate reductase (Salmonella dublin (strain CT_02021853)).